The chain runs to 590 residues: Protein ecdysoneless homolog (590 aa).

The segment at 445–464 is disordered; the sequence is EDFYGVKNSDTDTDSDSLAD. Positions 455-464 are enriched in acidic residues; that stretch reads TDTDSDSLAD.

This sequence belongs to the ECD family.

The protein resides in the cytoplasm. The protein localises to the nucleus. Its function is as follows. Involved in the regulation of carbohydrate metabolism. May act as a transcription factor. The protein is Protein ecdysoneless homolog of Schizosaccharomyces pombe (strain 972 / ATCC 24843) (Fission yeast).